The sequence spans 835 residues: Protein translocase subunit SecA (835 aa).

ATP is bound by residues Q85, G103–T107, and D492. Residues V788 to V807 are disordered. Zn(2+)-binding residues include C819, C821, C830, and C831.

This sequence belongs to the SecA family. In terms of assembly, monomer and homodimer. Part of the essential Sec protein translocation apparatus which comprises SecA, SecYEG and auxiliary proteins SecDF. Other proteins may also be involved. Zn(2+) is required as a cofactor.

It is found in the cell membrane. The protein resides in the cytoplasm. The catalysed reaction is ATP + H2O + cellular proteinSide 1 = ADP + phosphate + cellular proteinSide 2.. Part of the Sec protein translocase complex. Interacts with the SecYEG preprotein conducting channel. Has a central role in coupling the hydrolysis of ATP to the transfer of proteins into and across the cell membrane, serving as an ATP-driven molecular motor driving the stepwise translocation of polypeptide chains across the membrane. This chain is Protein translocase subunit SecA, found in Bacillus cereus (strain G9842).